Here is a 559-residue protein sequence, read N- to C-terminus: Pentatricopeptide repeat-containing protein At1g08610 (559 aa).

13 PPR repeats span residues Asp103–Pro137, His138–Pro172, Asp173–Pro207, Asp208–Pro242, Phe243–Pro277, Asp278–Leu312, Asn313–Pro347, Thr348–Pro382, Asp383–Pro417, Gly418–Pro452, Asp453–Ile487, Arg488–Pro522, and Asp523–Lys557.

Belongs to the PPR family. P subfamily.

This Arabidopsis thaliana (Mouse-ear cress) protein is Pentatricopeptide repeat-containing protein At1g08610.